The following is a 107-amino-acid chain: Ig kappa chain V-VI region XRPC 44 (107 aa).

Residues 1-23 (EIVLTQSPAITAASLGQKVTITC) are framework-1. An intrachain disulfide couples Cys-23 to Cys-87. Residues 24-33 (SASSSVSYMH) form a complementarity-determining-1 region. The interval 34-48 (WYQQKSGTSPKPWIY) is framework-2. A complementarity-determining-2 region spans residues 49–55 (EISKLAS). A framework-3 region spans residues 56–87 (GVPARFSGSGSGTSYSLTISSMEAEDAAIYYC). The complementarity-determining-3 stretch occupies residues 88–96 (QQWNYPLWT). A framework-4 region spans residues 97–106 (FGGGTKLEIK).

The polypeptide is Ig kappa chain V-VI region XRPC 44 (Mus musculus (Mouse)).